The sequence spans 701 residues: Polyribonucleotide nucleotidyltransferase (701 aa).

Residues Asp487 and Asp493 each coordinate Mg(2+). Residues 554-613 enclose the KH domain; it reads PTMIAMKIDTDKIRDVIGKGGATIRAICEETKASIDIEDDGSIKIFGETKEAAEAARQRV. Positions 623-691 constitute an S1 motif domain; it reads GKIYVGKVER…NRGRIKLSIK (69 aa).

Belongs to the polyribonucleotide nucleotidyltransferase family. In terms of assembly, component of the RNA degradosome, which is a multiprotein complex involved in RNA processing and mRNA degradation. Mg(2+) is required as a cofactor.

It localises to the cytoplasm. It catalyses the reaction RNA(n+1) + phosphate = RNA(n) + a ribonucleoside 5'-diphosphate. Functionally, involved in mRNA degradation. Catalyzes the phosphorolysis of single-stranded polyribonucleotides processively in the 3'- to 5'-direction. The sequence is that of Polyribonucleotide nucleotidyltransferase from Pseudomonas putida (strain W619).